The following is a 287-amino-acid chain: MAEITAALVKELRERTGQGMMECKKALVAAGGDIEKAIDDMRASGAIKAAKKSGNIAAEGSIAVRVEGGRGLIIEVNSQTDFLALQDDFKAFVKESLDEAFEQKLTEVAPLIASRESAREALVAKCGENVNIRRLSAVEGEVVGAYLHGHRIGVLVTLKGGDAELAKDIAMHVAASNPAVLSPADVSEELIAKEKEIFLQLNADKIAGKPENIVENMIKGRINKFLAEASLVEQPFVKDPEVKVGDLAKKAGAEIVSFVRYEVGEGIEKAEVDFAAEVAAQVAATKK.

The involved in Mg(2+) ion dislocation from EF-Tu stretch occupies residues 80–83 (TDFL).

It belongs to the EF-Ts family.

The protein localises to the cytoplasm. Functionally, associates with the EF-Tu.GDP complex and induces the exchange of GDP to GTP. It remains bound to the aminoacyl-tRNA.EF-Tu.GTP complex up to the GTP hydrolysis stage on the ribosome. The chain is Elongation factor Ts from Stutzerimonas stutzeri (strain A1501) (Pseudomonas stutzeri).